The chain runs to 351 residues: ATP-dependent 6-phosphofructokinase subunit gamma (351 aa).

Heterododecamer of 4 alpha, 4 beta and 4 gamma chains. The gamma chain bridges the N-terminal halves of the alpha and beta subunits.

The protein resides in the cytoplasm. It participates in carbohydrate degradation; glycolysis; D-glyceraldehyde 3-phosphate and glycerone phosphate from D-glucose: step 3/4. In terms of biological role, structural subunit of pyrophosphate--fructose 6-phosphate 1-phosphotransferase. Not required for catalytic activity. Fine-tunes allosteric regulation of the ATP-PFK by ATP, fructose 2,6-bisphosphate and AMP. In Komagataella pastoris (Yeast), this protein is ATP-dependent 6-phosphofructokinase subunit gamma (PFK3).